Here is a 997-residue protein sequence, read N- to C-terminus: Phosphoenolpyruvate carboxylase (997 aa).

Residues 1–67 (MKSSGSARTA…KPAARTREDK (67 aa)) form a disordered region. Catalysis depends on residues His207 and Lys649.

The protein belongs to the PEPCase type 1 family. Mg(2+) serves as cofactor.

It carries out the reaction oxaloacetate + phosphate = phosphoenolpyruvate + hydrogencarbonate. Its function is as follows. Forms oxaloacetate, a four-carbon dicarboxylic acid source for the tricarboxylic acid cycle. In Burkholderia vietnamiensis (strain G4 / LMG 22486) (Burkholderia cepacia (strain R1808)), this protein is Phosphoenolpyruvate carboxylase.